The following is a 141-amino-acid chain: uncharacterized protein (141 aa).

Belongs to the PhzA/PhzB family.

This is an uncharacterized protein from Pseudomonas aeruginosa (strain ATCC 15692 / DSM 22644 / CIP 104116 / JCM 14847 / LMG 12228 / 1C / PRS 101 / PAO1).